Reading from the N-terminus, the 250-residue chain is uncharacterized protein (250 aa).

A helical transmembrane segment spans residues 2 to 22 (ILRIIIFVIIILVVSLLLIYF).

It localises to the membrane. This is an uncharacterized protein from Acanthamoeba polyphaga (Amoeba).